Reading from the N-terminus, the 569-residue chain is Archaeosine synthase (569 aa).

The region spanning 495–569 is the PUA domain; sequence SGGKDINYIE…ALVNIRNVKS (75 aa).

This sequence belongs to the archaeosine synthase type 1 family. In terms of assembly, homodimer.

It carries out the reaction 7-cyano-7-carbaguanosine(15) in tRNA + L-glutamine + H2O = archaeosine(15) in tRNA + L-glutamate. The protein operates within tRNA modification; archaeosine-tRNA biosynthesis. Is responsible for the final step in the biosynthesis of archaeosine, a modified nucleoside present in the dihydrouridine loop (D-loop) of archaeal tRNA. Catalyzes the conversion of 7-cyano-7-deazaguanine (preQ0)-modified tRNA to archaeosine-tRNA, transforming a nitrile group to a formamidine group. Can use either glutamine, asparagine or ammonium as amino donor. In Methanocaldococcus jannaschii (strain ATCC 43067 / DSM 2661 / JAL-1 / JCM 10045 / NBRC 100440) (Methanococcus jannaschii), this protein is Archaeosine synthase.